A 490-amino-acid chain; its full sequence is C-type lectin domain family 14 member A (490 aa).

A signal peptide spans 1–21 (MRPAFALCLLWQALWPGPGGG). The Extracellular portion of the chain corresponds to 22–397 (EHPTADRAGC…TPQAFDSSSA (376 aa)). The C-type lectin domain occupies 33–173 (ASGACYSLHH…LRANGYLCKY (141 aa)). Cys143 and Cys162 form a disulfide bridge. The N-linked (GlcNAc...) asparagine glycan is linked to Asn189. In terms of domain architecture, EGF-like spans 245–287 (PCPGRYLRAGKCAELPNCLDDLGGFACECATGFELGKDGRSCV). The tract at residues 286-349 (CVTSGEGQPT…VTSIPEIPRW (64 aa)) is disordered. Low complexity predominate over residues 301-315 (VPTRRPPATATSPVP). Asn381 is a glycosylation site (N-linked (GlcNAc...) asparagine). A helical transmembrane segment spans residues 398–418 (VVFIFVSTAVVVLVILTMTVL). At 419 to 490 (GLVKLCFHES…AESPLGSSDA (72 aa)) the chain is on the cytoplasmic side. The disordered stretch occupies residues 428–461 (SPSSQPRKESMGPPGLESDPEPAALGSSSAHCTN).

It is found in the membrane. In Homo sapiens (Human), this protein is C-type lectin domain family 14 member A (CLEC14A).